We begin with the raw amino-acid sequence, 233 residues long: MSILQSVHNSFTPVHKEGYPFIIAFFVLSLIFGWVWSPLFWCGLVLTVWCIYFFRDPNRVIPVNSNWIISPADGRISFVEPCIPPEELGLGNEEMIRISVFMDIFSCHINRIPISGKVESIVYRPGQFANAELDKASQFNERNGMVIDSKHGKIGVVQIAGAIARRIVCWSKENDSVITGQRFGLIRFGSRLDIYIPTEVKLRVAVGQTAIAGETVLGSFDDKSSATIDFRFD.

S190 (schiff-base intermediate with substrate; via pyruvic acid) is an active-site residue. Residue S190 is modified to Pyruvic acid (Ser); by autocatalysis.

This sequence belongs to the phosphatidylserine decarboxylase family. PSD-A subfamily. In terms of assembly, heterodimer of a large membrane-associated beta subunit and a small pyruvoyl-containing alpha subunit. Pyruvate serves as cofactor. Is synthesized initially as an inactive proenzyme. Formation of the active enzyme involves a self-maturation process in which the active site pyruvoyl group is generated from an internal serine residue via an autocatalytic post-translational modification. Two non-identical subunits are generated from the proenzyme in this reaction, and the pyruvate is formed at the N-terminus of the alpha chain, which is derived from the carboxyl end of the proenzyme. The post-translation cleavage follows an unusual pathway, termed non-hydrolytic serinolysis, in which the side chain hydroxyl group of the serine supplies its oxygen atom to form the C-terminus of the beta chain, while the remainder of the serine residue undergoes an oxidative deamination to produce ammonia and the pyruvoyl prosthetic group on the alpha chain.

The protein resides in the cell membrane. It carries out the reaction a 1,2-diacyl-sn-glycero-3-phospho-L-serine + H(+) = a 1,2-diacyl-sn-glycero-3-phosphoethanolamine + CO2. The protein operates within phospholipid metabolism; phosphatidylethanolamine biosynthesis; phosphatidylethanolamine from CDP-diacylglycerol: step 2/2. Catalyzes the formation of phosphatidylethanolamine (PtdEtn) from phosphatidylserine (PtdSer). In Bartonella quintana (strain Toulouse) (Rochalimaea quintana), this protein is Phosphatidylserine decarboxylase proenzyme.